Here is a 164-residue protein sequence, read N- to C-terminus: Putative lung carcinoma-associated protein 10 (164 aa).

The tract at residues 1 to 164 is disordered; that stretch reads MSSCPVHDCP…TQKPQTTVGQ (164 aa). The segment covering 23–40 has biased composition (low complexity); the sequence is GSRGALRLRGGAPGSAAG. Residues 152–164 are compositionally biased toward polar residues; sequence MQKTQKPQTTVGQ.

The sequence is that of Putative lung carcinoma-associated protein 10 (LCA10) from Homo sapiens (Human).